We begin with the raw amino-acid sequence, 124 residues long: MATVNQLVRKPRQKPDAKSNVAALQACPQRRGVCTRVYTTTPKKPNSALRKVCRVRLTNGFEVSSYIGGEGHNLQEHSVVLIRGGRVKDLPGVRYHTVRGTLDCAGVSSRKQARSKYGAKRPKS.

Positions 1-22 (MATVNQLVRKPRQKPDAKSNVA) are disordered. Residue D89 is modified to 3-methylthioaspartic acid.

This sequence belongs to the universal ribosomal protein uS12 family. Part of the 30S ribosomal subunit. Contacts proteins S8 and S17. May interact with IF1 in the 30S initiation complex.

With S4 and S5 plays an important role in translational accuracy. Functionally, interacts with and stabilizes bases of the 16S rRNA that are involved in tRNA selection in the A site and with the mRNA backbone. Located at the interface of the 30S and 50S subunits, it traverses the body of the 30S subunit contacting proteins on the other side and probably holding the rRNA structure together. The combined cluster of proteins S8, S12 and S17 appears to hold together the shoulder and platform of the 30S subunit. The sequence is that of Small ribosomal subunit protein uS12 from Pseudoalteromonas atlantica (strain T6c / ATCC BAA-1087).